Here is a 76-residue protein sequence, read N- to C-terminus: uncharacterized protein (76 aa).

This is an uncharacterized protein from Magallana gigas (Pacific oyster).